The following is a 324-amino-acid chain: Probable cell division protein WhiA (324 aa).

Residues 275-308 constitute a DNA-binding region (H-T-H motif); sequence SLEELGALADPPLTKDAIAGRIRRLIAMADRRAD.

The protein belongs to the WhiA family.

Functionally, involved in cell division and chromosome segregation. The polypeptide is Probable cell division protein WhiA (Acidothermus cellulolyticus (strain ATCC 43068 / DSM 8971 / 11B)).